Reading from the N-terminus, the 131-residue chain is Anaerobic and virulence modulator AnvM (131 aa).

Plays an essential role by modulating the expression of hundreds of genes including quorum sensing system genes and oxidative stress resistance genes under both aerobic and anaerobic conditions. This is Anaerobic and virulence modulator AnvM from Pseudomonas aeruginosa (strain ATCC 15692 / DSM 22644 / CIP 104116 / JCM 14847 / LMG 12228 / 1C / PRS 101 / PAO1).